The following is a 163-amino-acid chain: RxLR effector protein PITG_13625 (163 aa).

The signal sequence occupies residues 1–23 (MKVSKAIVALAALCMALLAPAAG). A RxLR-dEER motif is present at residues 37-52 (RHLRQESAELATTPEE).

Belongs to the RxLR effector family.

Its subcellular location is the secreted. It localises to the host cell membrane. Its function is as follows. Effector that enhances P.infestans colonization of Nicotiana benthamiana leaves. This is RxLR effector protein PITG_13625 from Phytophthora infestans (strain T30-4) (Potato late blight agent).